Here is a 176-residue protein sequence, read N- to C-terminus: RNA pyrophosphohydrolase (176 aa).

The region spanning 6–149 (GYRPNVGIVI…KRDVYRRVMK (144 aa)) is the Nudix hydrolase domain. The Nudix box signature appears at 38 to 59 (GGINPGESAEQAMYRELFEEVG).

Belongs to the Nudix hydrolase family. RppH subfamily. A divalent metal cation serves as cofactor.

Accelerates the degradation of transcripts by removing pyrophosphate from the 5'-end of triphosphorylated RNA, leading to a more labile monophosphorylated state that can stimulate subsequent ribonuclease cleavage. The chain is RNA pyrophosphohydrolase from Salmonella arizonae (strain ATCC BAA-731 / CDC346-86 / RSK2980).